We begin with the raw amino-acid sequence, 83 residues long: Probable calcium-binding protein CML29 (83 aa).

EF-hand domains follow at residues 5-40 and 43-75; these read TEKA…LGSV and DDVK…NRGL. Ca(2+)-binding residues include D18, N20, D22, K24, E29, D53, D55, D57, N59, and E64.

Its function is as follows. Potential calcium sensor. The chain is Probable calcium-binding protein CML29 (CML29) from Arabidopsis thaliana (Mouse-ear cress).